The primary structure comprises 189 residues: Nucleoside triphosphate pyrophosphatase (189 aa).

Catalysis depends on aspartate 70, which acts as the Proton acceptor.

Belongs to the Maf family. The cofactor is a divalent metal cation.

It localises to the cytoplasm. It catalyses the reaction a ribonucleoside 5'-triphosphate + H2O = a ribonucleoside 5'-phosphate + diphosphate + H(+). It carries out the reaction a 2'-deoxyribonucleoside 5'-triphosphate + H2O = a 2'-deoxyribonucleoside 5'-phosphate + diphosphate + H(+). Functionally, nucleoside triphosphate pyrophosphatase. May have a dual role in cell division arrest and in preventing the incorporation of modified nucleotides into cellular nucleic acids. The polypeptide is Nucleoside triphosphate pyrophosphatase (Xylella fastidiosa (strain M23)).